Consider the following 364-residue polypeptide: NAD(P)H-quinone oxidoreductase subunit 1, chloroplastic (364 aa).

Transmembrane regions (helical) follow at residues 27–47 (IWLL…VLVI), 98–118 (FSVG…VIPF), 127–147 (ISIG…GLLM), 255–275 (GLFY…VTVL), 301–321 (VFGS…FLFV), and 337–357 (LLNL…LLTT).

The protein belongs to the complex I subunit 1 family. NDH is composed of at least 16 different subunits, 5 of which are encoded in the nucleus.

It localises to the plastid. The protein localises to the chloroplast thylakoid membrane. It catalyses the reaction a plastoquinone + NADH + (n+1) H(+)(in) = a plastoquinol + NAD(+) + n H(+)(out). The enzyme catalyses a plastoquinone + NADPH + (n+1) H(+)(in) = a plastoquinol + NADP(+) + n H(+)(out). Functionally, NDH shuttles electrons from NAD(P)H:plastoquinone, via FMN and iron-sulfur (Fe-S) centers, to quinones in the photosynthetic chain and possibly in a chloroplast respiratory chain. The immediate electron acceptor for the enzyme in this species is believed to be plastoquinone. Couples the redox reaction to proton translocation, and thus conserves the redox energy in a proton gradient. The chain is NAD(P)H-quinone oxidoreductase subunit 1, chloroplastic from Illicium oligandrum (Star anise).